We begin with the raw amino-acid sequence, 49 residues long: Disintegrin echistatin-gamma (49 aa).

The region spanning 1 to 47 (DCASGPCCRDCKFLEEGTICNMARGDDMDDYCNGKTCDCPRNPHKWP) is the Disintegrin domain. 4 disulfide bridges follow: Cys2–Cys11, Cys7–Cys32, Cys8–Cys37, and Cys20–Cys39. The Cell attachment site signature appears at 24-26 (RGD).

Belongs to the venom metalloproteinase (M12B) family. P-II subfamily. P-IIa sub-subfamily. Monomer. As to expression, expressed by the venom gland.

The protein localises to the secreted. Functionally, has antiplatelet activities on guinea pig, followed by human, rabbit and rat platelet-rich plasma. This chain is Disintegrin echistatin-gamma, found in Echis pyramidum leakeyi (Leakey's carpet viper).